Here is a 766-residue protein sequence, read N- to C-terminus: Protein sak1 (766 aa).

Positions 101–176 form a DNA-binding region, RFX-type winged-helix; that stretch reads GICWLKRACE…YHYCGIKLRG (76 aa). 3 positions are modified to phosphoserine: Ser-223, Ser-224, and Ser-227. Disordered stretches follow at residues 271–308 and 708–731; these read PQAHPLPSHLSQSNVPPQLSHSSVPSPAPPRSVSQPTY and LQEHRQSQQHFQQDIEALQSQQQQ. Over residues 279-289 the composition is skewed to polar residues; sequence HLSQSNVPPQL. Low complexity-rich tracts occupy residues 290–308 and 715–731; these read SHSSVPSPAPPRSVSQPTY and QQHFQQDIEALQSQQQQ.

This sequence belongs to the RFX family.

Its subcellular location is the nucleus. Its function is as follows. Positively regulates cyclic AMP-dependent protein kinase-mediated exit from the mitotic cell cycle. This is Protein sak1 (sak1) from Schizosaccharomyces pombe (strain 972 / ATCC 24843) (Fission yeast).